A 2080-amino-acid polypeptide reads, in one-letter code: MLLTAQIPESLTPFSISHGSLSVSWLLPYRLHCYATRLYRTFEATLAARSDNSEHPITLLSSVELAAHYMCYVAHETQANTDRACTQTHDISKLLLEDFEATFLRSNDIHTLASALPSSDSAKDELLRCYYETCFITKHNTPLNESALLKAAREGIVSLYTTFSGQGCGGRYFDELRELFRLYPSFVGTLISESGNLFRELASNPSAGRLFSKGFDIMAWLHHPQTTPDTEYLISAPVSFPIIGLVQLGHYAVSCRAMGLDPGAFQRSIRGSTGHSQGIVVAAAMSAADSWEAFDRLAISCLTVLFWIGVRSQQAAPQMSLSPAQIQDSIDHNEDVPSPMLSIIGLSRLDVQMHIDSINHYLPQSEHISISLVNGGRHIVVSGLPSTLYRFNLLLRKIKVPDHSGQPRATSKQKKAQFSARFLPITVPFHSHHLVSVGSVLEEDLKNVFIGSKDLGFPVFNTYTGRDLRAEVIGNIVPALVRMVTQYPVFWGAAVEFPGATHILEFGPGGLSGSGALTSHIKNGTGVRVIFAGLTSGSNRQVGYKQELFARDTCHVKFADDWSRKYAPSLVRTSNNSIVVNTKMSRLLGLPPIMVGGMTPTTAAWGFVAATMNAGYHIELAAGGYSDANAFENALLNIQKTTASGRGITVNLIYLSSHAVNWQIPLLRRLIIDGFRIEGITIGGGVPSIDVAKEYITTLGIKHIGFKPGPTTAIDAVIEIAQANPTFPVFLQWTGGRSGGHHSNEDFHQPILETYDRIRQCDNIILIAGSGFGGAADTYPYITGEWSLRYDFPPMPFDGCLLGSRVMVAKEARTSPAAKRVIVETEGLNDNEWRRTYEEAAGGIITVQSEMGQPIHKIATRGVLFWAKLDQMIFSLPKEKRIAELQKHRSWIIKGLNDDFQKPWFGRDSADQVVELRDMTYAEVLRRMVQLLYVKHQRRWIHSSYAVLFKAFVNRLEERFTTKTVQSYLIQDCKTIDDPYNIITVVLLQYQQAIKETILTPDVEYFLLLCKRRGQKPVPFVPALDEDFEFFFKKDSLWQSEDLEAVVDQDVGRTCILQGPVAAKYSVKVDEPIAEILGSIHQGHVTRLREERYCATLDSIPFVEYFGGESIQLDMSSLADGIEQSHNEQASIYSLPSSLSMPLPAVDVWMSLLAGKSRSWRHAIMSAGIVIQENKCVANPMRRLFAPAHGIRVQIRKPDVPSQTEVVLEEQQESGIYEVAVRAGLNEDGEIIVEMFERRNMSDLVVSLPCDSGTKPEYGYAPIREIMEDRNERIRRFYWSIWFGKSHPILEGSLSDSFECGKEKITRQHVESFIQAINNSTRTHKNFLEPATNVSISFAIPVAWKAIVKPLFLNALNGDLLQLVHLSNEFRMTPGAEPLKIGEEVSTVARINAIMNQDSGKMVEVSAAVLRGKEIVVEIISRFLYRGAFVDFKDTFQWRDEPLMQIQLATSKHIAVLRTREWFVPTQGCNIDLVGHTLTFQMRSLYKFQSKTVFRRIETHGKVTLELAPQKIVQVATVQYEVGICHSNTVIEFLDRYGSYSQNSVDFEDPVSVPNNGESLVICAPSSNEAYARTSGDLNPIHVSRTFAEYAGLPGLITHGMYCSAAIQDLVERLVADGNAGRIRQFSMSFVGMVLPNQKLEVKLEHIGMVEGMIRLHIEARAQETGHRVIVGEAKITQKMTTYVFTGQGSQEKGMGMDLYNQCPAAREVWDRGDKYFLHKYGFAITTIVRDNPKQLTVHFGGRQGEAIRQNYINMKVETVAEDGSIQYEKLFKDVDHNTQFYTFRSPTGLLSATQFTQPALSLMARASFEHLQIQGLVDGNCYYAGHSLGEFSALAAVAGIMSVESQALIAFYRGLTMQKAVNRDESGRSNYSMCAVDPSRISATYDEEAFLTIVREIAAETGWLLEVVNFNVANKQYVCAGNLHALDTLAGVTDRLRLLQINASEMEECLHEIIRQCVQETKSKSTPLELTRGIATIPLQGIDVPFHSTFLRGGVRHFREFLHENIDKRNINPAKLIGRYIPNVTARSFQISKDYFQYVYDLTGSSQLRDALKNWDIYEKSNGEESNGVEECSECRNSL.

The Starter acyltransferase (SAT) domain maps to 170–397; it reads GRYFDELREL…LYRFNLLLRK (228 aa). Ser276 serves as the catalytic For acetyltransferase activity. Positions 585-830 are enoyl reductase (ER) domain; that stretch reads SRLLGLPPIM…VIVETEGLND (246 aa). Residues 1155-1644 form a dehydratase (DH) domain region; it reads GKSRSWRHAI…LPNQKLEVKL (490 aa). The MaoC-like domain maps to 1544 to 1662; the sequence is SVDFEDPVSV…MIRLHIEARA (119 aa). Residues 1682–2046 enclose the Malonyl-CoA:ACP transacylase (MAT) domain; that stretch reads TYVFTGQGSQ…FQYVYDLTGS (365 aa). Positions 1683 to 2046 are malonyl/palmitoyl transferase (MT/PT) domain; that stretch reads YVFTGQGSQE…FQYVYDLTGS (364 aa). Catalysis depends on Ser1828, which acts as the For malonyltransferase activity.

Belongs to the fungal fatty acid synthetase subunit beta family.

It carries out the reaction acetyl-CoA + n malonyl-CoA + 2n NADPH + 4n H(+) = a long-chain-acyl-CoA + n CoA + n CO2 + 2n NADP(+).. The catalysed reaction is holo-[ACP] + acetyl-CoA = acetyl-[ACP] + CoA. The enzyme catalyses holo-[ACP] + malonyl-CoA = malonyl-[ACP] + CoA. It catalyses the reaction a (3R)-hydroxyacyl-[ACP] = a (2E)-enoyl-[ACP] + H2O. It carries out the reaction a 2,3-saturated acyl-[ACP] + NAD(+) = a (2E)-enoyl-[ACP] + NADH + H(+). The catalysed reaction is (9Z)-octadecenoyl-[ACP] + H2O = (9Z)-octadecenoate + holo-[ACP] + H(+). The protein operates within mycotoxin biosynthesis; HC-toxin biosynthesis. Fatty acid synthase beta subunit, part of the diffuse TOX2 gene cluster that mediates the biosynthesis of the HC-toxin, cyclic tetrapeptide of structure cyclo(D-Pro-L-Ala-D-Ala-L-Aeo), where Aeo stands for 2-amino-9,10-epoxi-8-oxodecanoic acid. HC-toxin is a determinant of specificity and virulence in the interaction between the producing fungus and its host, maize. TOXC contribute to the synthesis of the decanoic backbone of 2-amino-9,10-epoxi-8-oxodecanoic acid, an essential precursor for the production of the major forms of HC-toxin by the non-ribosomal peptide synthetase HTS1. The protein is Fatty acid synthase beta subunit TOXC of Cochliobolus carbonum (Maize leaf spot fungus).